We begin with the raw amino-acid sequence, 463 residues long: O-phospho-L-seryl-tRNA:Cys-tRNA synthase 2 (463 aa).

Pyridoxal 5'-phosphate-binding positions include 154–155, Asn259, and 282–284; these read AR and SGH. Lys285 carries the post-translational modification N6-(pyridoxal phosphate)lysine.

This sequence belongs to the SepCysS family. As to quaternary structure, homodimer. Interacts with SepRS. Pyridoxal 5'-phosphate is required as a cofactor.

It carries out the reaction O-phospho-L-seryl-tRNA(Cys) + hydrogen sulfide + H(+) = L-cysteinyl-tRNA(Cys) + phosphate. In terms of biological role, converts O-phospho-L-seryl-tRNA(Cys) (Sep-tRNA(Cys)) to L-cysteinyl-tRNA(Cys) (Cys-tRNA(Cys)). This chain is O-phospho-L-seryl-tRNA:Cys-tRNA synthase 2, found in Methanocella arvoryzae (strain DSM 22066 / NBRC 105507 / MRE50).